A 361-amino-acid chain; its full sequence is Transposase A from transposon Tn554 (361 aa).

The 98-residue stretch at 23–120 folds into the Core-binding (CB) domain; the sequence is YQLIEPVMKF…VVMSFLDYLS (98 aa). A Tyr recombinase domain is found at 163–351; that stretch reads KQIRTLRSKE…SDQDMKNEFN (189 aa). Active-site residues include R198, K232, H302, R305, and H328. Y338 acts as the O-(3'-phospho-DNA)-tyrosine intermediate in catalysis.

The protein belongs to the 'phage' integrase family.

Its function is as follows. One of three proteins encoded by transposon Tn554 required for its transposition. This is Transposase A from transposon Tn554 (tnpA1) from Staphylococcus aureus (strain Mu50 / ATCC 700699).